Consider the following 334-residue polypeptide: Cytosolic Fe-S cluster assembly factor NBP35 (334 aa).

[4Fe-4S] cluster is bound by residues Cys33, Cys47, Cys50, and Cys56. Position 86–93 (86–93 (GKGGVGKS)) interacts with ATP. Positions 259 and 262 each coordinate [4Fe-4S] cluster.

This sequence belongs to the Mrp/NBP35 ATP-binding proteins family. NUBP1/NBP35 subfamily. Heterotetramer of 2 NBP35 and 2 CFD1 chains. It depends on [4Fe-4S] cluster as a cofactor.

Its subcellular location is the cytoplasm. It is found in the nucleus. Functionally, component of the cytosolic iron-sulfur (Fe/S) protein assembly (CIA) machinery. Required for maturation of extramitochondrial Fe-S proteins. The NBP35-CFD1 heterotetramer forms a Fe-S scaffold complex, mediating the de novo assembly of an Fe-S cluster and its transfer to target apoproteins. Required for biogenesis and export of both ribosomal subunits, which may reflect a role in assembly of the Fe/S clusters in RLI1, a protein which performs rRNA processing and ribosome export. In Candida glabrata (strain ATCC 2001 / BCRC 20586 / JCM 3761 / NBRC 0622 / NRRL Y-65 / CBS 138) (Yeast), this protein is Cytosolic Fe-S cluster assembly factor NBP35.